The sequence spans 439 residues: Maintenance of mitochondrial morphology protein 1 (439 aa).

Topologically, residues 1–76 (MSQDLIETTA…NGNTWSFTQG (76 aa)) are lumenal. A helical transmembrane segment spans residues 77–97 (LVIGQVSVIFIIIVFVKFFVF). At 98-439 (ADSSSHIPTK…TPGEYVNSNI (342 aa)) the chain is on the cytoplasmic side. Disordered stretches follow at residues 125 to 145 (KHSN…SLDS), 309 to 336 (MNGY…DGGT), and 405 to 425 (REPV…GTSA). An SMP-LTD domain is found at 165-395 (ASESLDWFNV…EPRFQVVRLP (231 aa)). Composition is skewed to low complexity over residues 315-326 (ENANGDGASSSN) and 410-424 (KKTT…NGTS).

This sequence belongs to the MMM1 family. As to quaternary structure, homodimer. Component of the ER-mitochondria encounter structure (ERMES) or MDM complex, composed of MMM1, MDM10, MDM12 and MDM34. An MMM1 homodimer associates with one molecule of MDM12 on each side in a pairwise head-to-tail manner, and the SMP-LTD domains of MMM1 and MDM12 generate a continuous hydrophobic tunnel for phospholipid trafficking.

It localises to the endoplasmic reticulum membrane. In terms of biological role, component of the ERMES/MDM complex, which serves as a molecular tether to connect the endoplasmic reticulum (ER) and mitochondria. Components of this complex are involved in the control of mitochondrial shape and protein biogenesis, and function in nonvesicular lipid trafficking between the ER and mitochondria. The MDM12-MMM1 subcomplex functions in the major beta-barrel assembly pathway that is responsible for biogenesis of all outer membrane beta-barrel proteins, and acts in a late step after the SAM complex. The MDM10-MDM12-MMM1 subcomplex further acts in the TOM40-specific pathway after the action of the MDM12-MMM1 complex. Essential for establishing and maintaining the structure of mitochondria and maintenance of mtDNA nucleoids. In Candida albicans (strain WO-1) (Yeast), this protein is Maintenance of mitochondrial morphology protein 1.